The sequence spans 286 residues: Translocon-associated protein subunit alpha (286 aa).

The N-terminal stretch at 1–20 is a signal peptide; it reads MSSLRRLLLLLLLVFPATLL. Residues 21-207 are Lumenal-facing; the sequence is LRVGPGGSLA…EREDGLDGET (187 aa). The span at 37-75 shows a compositional bias: acidic residues; sequence EDEETVEDSIIEDEDDEAEVEEDEPTDLAEDKEEDDVSG. Residues 37-83 are disordered; sequence EDEETVEDSIIEDEDDEAEVEEDEPTDLAEDKEEDDVSGEPEASPSA. 2 N-linked (GlcNAc...) asparagine glycosylation sites follow: N136 and N191. Residues 208 to 228 traverse the membrane as a helical segment; that stretch reads IFMYMFLAGLGLLVVVGLHQL. Residues 229-286 lie on the Cytoplasmic side of the membrane; the sequence is LESRKRKRPIQKVEMGTSSQNDVDMSWIPQETLNQINKASPRRLPRKRAQKRSVGSDE. S247 carries the post-translational modification Phosphoserine. T260 is modified (phosphothreonine). The disordered stretch occupies residues 261-286; it reads LNQINKASPRRLPRKRAQKRSVGSDE. S268 carries the post-translational modification Phosphoserine. Basic residues predominate over residues 268–279; sequence SPRRLPRKRAQK.

The protein belongs to the TRAP-alpha family. In terms of assembly, heterotetramer of TRAP-alpha, TRAP-beta, TRAP-delta and TRAP-gamma. Interacts with palmitoylated calnexin (CALX), the interaction is required for efficient folding of glycosylated proteins. In terms of processing, phosphorylated in its cytoplasmic tail.

Its subcellular location is the endoplasmic reticulum membrane. In terms of biological role, TRAP proteins are part of a complex whose function is to bind calcium to the ER membrane and thereby regulate the retention of ER resident proteins. May be involved in the recycling of the translocation apparatus after completion of the translocation process or may function as a membrane-bound chaperone facilitating folding of translocated proteins. This chain is Translocon-associated protein subunit alpha (SSR1), found in Bos taurus (Bovine).